The chain runs to 40 residues: MVDTTGRIPLWLVGTVAGILVIGLIGIFFYGSYSGLGSSL.

A helical membrane pass occupies residues 8–28; the sequence is IPLWLVGTVAGILVIGLIGIF.

The protein belongs to the PsbJ family. As to quaternary structure, PSII is composed of 1 copy each of membrane proteins PsbA, PsbB, PsbC, PsbD, PsbE, PsbF, PsbH, PsbI, PsbJ, PsbK, PsbL, PsbM, PsbT, PsbX, PsbY, PsbZ, Psb30/Ycf12, at least 3 peripheral proteins of the oxygen-evolving complex and a large number of cofactors. It forms dimeric complexes.

The protein resides in the plastid. The protein localises to the chloroplast thylakoid membrane. Its function is as follows. One of the components of the core complex of photosystem II (PSII). PSII is a light-driven water:plastoquinone oxidoreductase that uses light energy to abstract electrons from H(2)O, generating O(2) and a proton gradient subsequently used for ATP formation. It consists of a core antenna complex that captures photons, and an electron transfer chain that converts photonic excitation into a charge separation. The chain is Photosystem II reaction center protein J from Gnetum parvifolium (Small-leaved jointfir).